Here is a 473-residue protein sequence, read N- to C-terminus: Pre-mRNA-splicing factor PRP46 (473 aa).

A compositionally biased stretch (polar residues) spans M1–G14. Disordered stretches follow at residues M1–G21 and G103–A126. WD repeat units lie at residues G180–S219, G222–H261, G264–T303, G306–T347, H349–N388, G391–H429, and D440–A473.

The protein belongs to the WD repeat PRL1/PRL2 family. In terms of assembly, associated with the spliceosome.

The protein resides in the cytoplasm. The protein localises to the nucleus. Functionally, involved in pre-mRNA splicing and required for cell cycle progression at G2/M. This Cryptococcus neoformans var. neoformans serotype D (strain B-3501A) (Filobasidiella neoformans) protein is Pre-mRNA-splicing factor PRP46 (PRP46).